We begin with the raw amino-acid sequence, 269 residues long: ATP synthase subunit delta (269 aa).

This sequence belongs to the ATPase delta chain family. F-type ATPases have 2 components, F(1) - the catalytic core - and F(0) - the membrane proton channel. F(1) has five subunits: alpha(3), beta(3), gamma(1), delta(1), epsilon(1). F(0) has three main subunits: a(1), b(2) and c(10-14). The alpha and beta chains form an alternating ring which encloses part of the gamma chain. F(1) is attached to F(0) by a central stalk formed by the gamma and epsilon chains, while a peripheral stalk is formed by the delta and b chains.

The protein resides in the cell membrane. Its function is as follows. F(1)F(0) ATP synthase produces ATP from ADP in the presence of a proton or sodium gradient. F-type ATPases consist of two structural domains, F(1) containing the extramembraneous catalytic core and F(0) containing the membrane proton channel, linked together by a central stalk and a peripheral stalk. During catalysis, ATP synthesis in the catalytic domain of F(1) is coupled via a rotary mechanism of the central stalk subunits to proton translocation. In terms of biological role, this protein is part of the stalk that links CF(0) to CF(1). It either transmits conformational changes from CF(0) to CF(1) or is implicated in proton conduction. The sequence is that of ATP synthase subunit delta from Thermobifida fusca (strain YX).